Consider the following 3948-residue polypeptide: Equisetin synthetase eqxS (3948 aa).

The Ketosynthase family 3 (KS3) domain maps to 4–438 (SEPIAVIGSA…GTNAHAIIEA (435 aa)). Catalysis depends on for beta-ketoacyl synthase activity residues Cys177, His316, and His358. A malonyl-CoA:ACP transacylase (MAT) domain region spans residues 543–847 (IFTGQGTQWP…DTIEAISEGR (305 aa)). The tract at residues 931 to 1066 (HPLLGRRCHD…AQIKASLGAP (136 aa)) is N-terminal hotdog fold. Residues 931-1233 (HPLLGRRCHD…MELVPFSPAT (303 aa)) are dehydratase (DH) domain. Positions 931 to 1235 (HPLLGRRCHD…LVPFSPATPA (305 aa)) constitute a PKS/mFAS DH domain. The active-site Proton acceptor; for dehydratase activity is His964. The segment at 1081–1235 (LRPVSVDRFY…LVPFSPATPA (155 aa)) is C-terminal hotdog fold. The active-site Proton donor; for dehydratase activity is Asp1141. A methyltransferase (MT) domain region spans residues 1376–1574 (MLQDVYEQGF…GIDTTTPPVH (199 aa)). The ketoreductase (KR) domain stretch occupies residues 2105 to 2277 (TFLLVGLTGE…VAASSIDISS (173 aa)). Residues 2389–2464 (AIIKESFIVR…DLVDECLDLL (76 aa)) enclose the Carrier 1 domain. Ser2424 carries the O-(pantetheine 4'-phosphoryl)serine modification. Residues 2480 to 2553 (QAAKPTTVIP…NSTDILAPPR (74 aa)) are disordered. Composition is skewed to polar residues over residues 2487 to 2505 (VIPQ…QGTS) and 2513 to 2528 (GSDS…LTSW). Residues 2529-2541 (DRQDSSPPDKSDD) are compositionally biased toward basic and acidic residues. The segment at 2564–2991 (SYGQAGFWFL…IRGSDKTVDA (428 aa)) is condensation (C) domain. The adenylation (A) (KR) domain stretch occupies residues 3026 to 3424 (QVIQDNPDNI…DGLLFCDGRL (399 aa)). Residues 3540 to 3617 (EILTPSEQRL…AMAGVLEDCG (78 aa)) enclose the Carrier 2 domain. Ser3577 is subject to O-(pantetheine 4'-phosphoryl)serine. The interval 3653-3870 (LTGSSGYLGR…MPVNEVVEAI (218 aa)) is reductase (RED) domain.

It in the C-terminal section; belongs to the NRP synthetase family.

It carries out the reaction L-serine + 7 malonyl-CoA + acetyl-CoA + 2 S-adenosyl-L-methionine + ATP + 8 NADPH + 11 H(+) = (5S)-3-[(2E,6R,8E,10E,12E)-2,6-dimethyltetradeca-2,8,10,12-tetraenoyl]-5-(hydroxymethyl)pyrrolidine-2,4-dione + AMP + 2 S-adenosyl-L-homocysteine + 7 CO2 + diphosphate + 8 NADP(+) + 8 CoA + 6 H2O. It functions in the pathway mycotoxin biosynthesis. Functionally, hybrid PKS-NRPS synthetase; part of the gene cluster that mediates the biosynthesis of equisetin, a trans-fused decalin-containing tetramic acid with antimicrobial activity. The PKS module of eqxS together with the enoylreductase eqxC catalyze the formation of the polyketide unit which is then conjugated to L-serine by the condensation domain of the eqxS NRPS module. Activity of the Dieckmann cyclase domain (RED) results in release of the Dieckmann product intermediate. Diels-Alderase eqx3 is involved in endo-selective Diels-Alder cycloaddition to form the decalin ring, leading to the production of N-desmethylequisetin also called trichosetin. Subsequent N-methylation is carried out by eqxD to give equisetin. In Fusarium heterosporum, this protein is Equisetin synthetase eqxS.